Here is a 431-residue protein sequence, read N- to C-terminus: Gamma conglutin 1 (431 aa).

Positions 1-24 (MASFLHNFLLFFCSLSLIILTSSA) are cleaved as a signal peptide. Residues 51–407 (HVVQIHKRTP…DLMNSRLGFS (357 aa)) form the Peptidase A1 domain. 5 disulfides stabilise this stretch: cysteine 79/cysteine 168, cysteine 93/cysteine 106, cysteine 98/cysteine 123, cysteine 109/cysteine 118, and cysteine 322/cysteine 369.

It belongs to the peptidase A1 family. As to quaternary structure, two-subunit monomeric unit made of alpha and beta subunits coupled by disulfide bonds (at pH 4.5 and under non-reducing conditions). Monomeric alpha and beta subunits in reducing conditions. Can also form oligomers including dimer, tetramer and cyclic hexamer (trimer of dimers) (at pH &gt; 5.5). Component of globulins complexes which accumulate in seeds. Interacts with flavonoids (e.g. apigenin glucosides) present in globulins complexes.

It is found in the secreted. The protein resides in the extracellular space. Sulfur-rich seed storage protein that remains undegraded at germination. This is Gamma conglutin 1 from Prunus dulcis (Almond).